Here is a 282-residue protein sequence, read N- to C-terminus: Bifunctional protein FolD 2 (282 aa).

NADP(+) contacts are provided by residues 165–167 and Ser-190; that span reads GRS.

The protein belongs to the tetrahydrofolate dehydrogenase/cyclohydrolase family. As to quaternary structure, homodimer.

It carries out the reaction (6R)-5,10-methylene-5,6,7,8-tetrahydrofolate + NADP(+) = (6R)-5,10-methenyltetrahydrofolate + NADPH. It catalyses the reaction (6R)-5,10-methenyltetrahydrofolate + H2O = (6R)-10-formyltetrahydrofolate + H(+). It participates in one-carbon metabolism; tetrahydrofolate interconversion. Functionally, catalyzes the oxidation of 5,10-methylenetetrahydrofolate to 5,10-methenyltetrahydrofolate and then the hydrolysis of 5,10-methenyltetrahydrofolate to 10-formyltetrahydrofolate. The polypeptide is Bifunctional protein FolD 2 (Acinetobacter baylyi (strain ATCC 33305 / BD413 / ADP1)).